Here is a 349-residue protein sequence, read N- to C-terminus: MSSFSTTERLAAKLKKPKEVYSYSITDGKVTMDQSQLKYYYLPEETILKAPIDLTKGIENWTQPNEHDTHLDTLLESLSKYERETGSKIDAEIITWRGILTKIMTHPYDQYNEPIVLNITYFDGHYFIEEDWQSKQQGKKAPDEQMKKHIYSGYKFESVALLNEPWFKSSREDIESRFDDIPNGDQFVSVVRTQIGDNKILIGGEVDCVFDPCAKGTSRYGELKTSREVHNAKDGEILERKMNRAWAQSFLLGVKHIIYGYRTGDHKLAAVDYFKTEDLPMYAGASSTWSGTDEINFLNAALTKLKDLPKEDNKLWRLVFDSANKKVDITELDGESFLLKEFVDWRKSM.

Glutamate 157 is an a divalent metal cation binding site. Position 205 (glutamate 205) interacts with substrate. A divalent metal cation-binding residues include aspartate 207, glutamate 222, and leucine 223. 2 residues coordinate substrate: lysine 224 and glutamine 248.

The protein belongs to the DXO/Dom3Z family. As to quaternary structure, interacts with RAT1; the interaction is direct, stabilizes RAT1 protein structure and stimulates its exoribonuclease activity. The interaction also stimulates RAI1 pyrophosphohydrolase activity, probably by recruiting it to mRNA substrates. It depends on a divalent metal cation as a cofactor.

Its subcellular location is the nucleus. The enzyme catalyses a 5'-end NAD(+)-phospho-ribonucleoside in mRNA + H2O = a 5'-end phospho-ribonucleoside in mRNA + NAD(+) + H(+). It catalyses the reaction a 5'-end (N(7)-methyl 5'-triphosphoguanosine)-ribonucleoside-ribonucleotide in mRNA + H2O = a (N(7)-methyl 5'-triphosphoguanosine)-nucleoside + a 5'-end phospho-ribonucleoside in mRNA + H(+). The catalysed reaction is a 5'-end triphospho-ribonucleoside in mRNA + H2O = a 5'-end phospho-ribonucleoside in mRNA + diphosphate + H(+). Decapping enzyme for NAD-capped RNAs: specifically hydrolyzes the nicotinamide adenine dinucleotide (NAD) cap from a subset of RNAs by removing the entire NAD moiety from the 5'-end of an NAD-capped RNA. The NAD-cap is present at the 5'-end of some RNAs and snoRNAs. In contrast to the canonical 5'-end N7 methylguanosine (m7G) cap, the NAD cap promotes mRNA decay. Also acts as a non-canonical decapping enzyme that removes the entire cap structure of m7G capped or incompletely capped RNAs. Has decapping activity toward incomplete 5'-end m7G cap mRNAs such as unmethylated 5'-end-capped RNA (cap0), while it has no activity toward 2'-O-ribose methylated m7G cap (cap1). Also possesses RNA 5'-pyrophosphohydrolase activity by hydrolyzing the 5'-end triphosphate to release pyrophosphates. Stimulates exoribonuclease activity of Rat1, allowing it to degrade RNAs with stable secondary structure more effectively. This is Decapping nuclease RAI1 (RAI1) from Yarrowia lipolytica (strain CLIB 122 / E 150) (Yeast).